Consider the following 149-residue polypeptide: 17 kDa major membrane protein (149 aa).

A signal peptide spans 1–19 (MKKIIKLSLLSLSIAGLAS). The N-palmitoyl cysteine moiety is linked to residue C20. C20 is lipidated: S-diacylglycerol cysteine.

The protein localises to the cell outer membrane. The protein is 17 kDa major membrane protein of Francisella tularensis subsp. holarctica (strain LVS).